The following is a 461-amino-acid chain: V-type ATP synthase beta chain (461 aa).

Belongs to the ATPase alpha/beta chains family.

Produces ATP from ADP in the presence of a proton gradient across the membrane. The V-type beta chain is a regulatory subunit. The protein is V-type ATP synthase beta chain of Clostridium botulinum (strain 657 / Type Ba4).